The sequence spans 411 residues: MAQCVRSTLNPVRTPQSFTRKAYVKSPAFASVSFLRAVPEFNKYPKPCSLVMSCQGKAQNQQEERPQLSLDDLVTSNRKGEVLGTIKDSLSNCLSETNLLATVPGLKSRIKGKVRDIYDAGDYLVLITTDRLSAFDRNLASIPFKGQVLNETSLWWFNNTQHITPNAIVSSPDRNVVIAKKCSVFPIEFVVRGYVTGSTDTSLWTVYNKGVRNYCGNELSDGLVKNQKLPANILTPTTKAADHDVPISPNEIVEGGFMTQAEFDEASMKALSLFEFGQGVAKKHGLILVDTKYEFGRSSDGSILLIDEIHTPDSSRYWLAGSYEERFQKGLEPENVDKEFLRLWFKENCNPYEDEVLPAAPAELVTELAWRYIFLYETITGSRIDIIPTQEPIHDRISRNTSQALSSLRQL.

A chloroplast-targeting transit peptide spans 1 to 53 (MAQCVRSTLNPVRTPQSFTRKAYVKSPAFASVSFLRAVPEFNKYPKPCSLVMS).

Belongs to the SAICAR synthetase family.

Its subcellular location is the plastid. The protein localises to the chloroplast. The catalysed reaction is 5-amino-1-(5-phospho-D-ribosyl)imidazole-4-carboxylate + L-aspartate + ATP = (2S)-2-[5-amino-1-(5-phospho-beta-D-ribosyl)imidazole-4-carboxamido]succinate + ADP + phosphate + 2 H(+). Its pathway is purine metabolism; IMP biosynthesis via de novo pathway; 5-amino-1-(5-phospho-D-ribosyl)imidazole-4-carboxamide from 5-amino-1-(5-phospho-D-ribosyl)imidazole-4-carboxylate: step 1/2. This Arabidopsis thaliana (Mouse-ear cress) protein is Phosphoribosylaminoimidazole-succinocarboxamide synthase, chloroplastic (PUR7).